Here is a 558-residue protein sequence, read N- to C-terminus: MSVVMLVFRVLLLIALVGNSAIGLSLMPFIAPPDPDWTPDDYYYSYEQSSPDKDASVTQTSPENPDWYYEDDDPCQSNPCEHGGDCIIRGNTFSCSCPAPFSGSRCQTVQNKCKDNPCVQGDCLITQTPPYYRCACKYPYTGPDCSKVLPVCRPNPCQNGGVCSRHRRRSRFSCACPDQYKGRFCEIGPDDCYVGDGYSYRGKVSRTVNQNPCLYWNSHLLLQENYNMFMEDAETHGIADHNFCRNPDGDHKPWCFVKVNSEKVKWEYCNVEVCPESDAANPVGSLQEPVMELPGFDSCGKTEMTEHAVKRIYGGFKSTAGKHPWQVSLQTSLPLTTSMPQGHFCGGSLIHPCWVLTAAHCTDMSTKHLKVVLGDQDLKKTESHEQTFRVEKILKYSQYNERDEIPHNDIALLKLKPVGGHCALESKYVKTVCLPSDPFPSGTECHISGWGVTETGEGSRQLLDAKVKLIANALCNSRQLYDHTIDDSMICAGNLQKPGSDTCQGDSGGPLTCEKDGTYYVYGIVSWGQECGKKPGVYTQVTKFLNWIKTTMHKEAGL.

The N-terminal stretch at 1–23 (MSVVMLVFRVLLLIALVGNSAIG) is a signal peptide. EGF-like domains are found at residues 71–107 (DDDP…SRCQ), 109–146 (VQNK…PDCS), and 148–186 (VLPV…RFCE). 18 disulfide bridges follow: C75–C86, C80–C95, C97–C106, C113–C123, C118–C134, C136–C145, C152–C163, C157–C174, C176–C185, C192–C274, C213–C255, C244–C269, C299–C433, C345–C361, C353–C422, C445–C513, C475–C491, and C503–C531. Positions 191-274 (DCYVGDGYSY…KWEYCNVEVC (84 aa)) constitute a Kringle domain. The region spanning 312-553 (IYGGFKSTAG…FLNWIKTTMH (242 aa)) is the Peptidase S1 domain. Active-site charge relay system residues include H360 and D409. S507 acts as the Charge relay system in catalysis.

This sequence belongs to the peptidase S1 family. In terms of assembly, heterodimer; disulfide-linked. Heterodimer of a 50 kDa heavy and a 27 kDa light chain linked by a disulfide bond. Post-translationally, proteolytic cleavage at Gly-23 or Met-27 can give rise to the 50 kDa heavy chain (HC) and cleavage at Arg-311 or Lys-317 can give rise to the 27 kDa light chain (LC). The HC can undergo further proteolytic cleavage giving rise to a 26 kDa fragment. The LC can undergo further proteolytic cleavage at Arg-311 leading to a 17-kDa fragment and at Arg-478 leading to a 8-kDa fragment.

Its subcellular location is the secreted. Functionally, cleaves the alpha-chain at multiple sites and the beta-chain between 'Lys-53' and 'Lys-54' but not the gamma-chain of fibrinogen and therefore does not initiate the formation of the fibrin clot and does not cause the fibrinolysis directly. It does not cleave (activate) prothrombin and plasminogen but converts the inactive single chain urinary plasminogen activator (pro-urokinase) to the active two chain form. Activates coagulation factor VII. May function as a tumor suppressor negatively regulating cell proliferation and cell migration. This Rattus norvegicus (Rat) protein is Factor VII-activating protease.